The primary structure comprises 648 residues: Siderophore transporter MYCGRDRAFT_70577 (648 aa).

Basic and acidic residues-rich tracts occupy residues 1-11 (MRTSSESHSRS) and 29-46 (SASK…DTSI). The interval 1–58 (MRTSSESHSRSDAFNGKNDASQVTVDSDSASKDHHDHDHHHKDTSINERQSQHVHQQA) is disordered. The span at 47-58 (NERQSQHVHQQA) shows a compositional bias: polar residues. 11 helical membrane-spanning segments follow: residues 79–99 (LLLY…ALDQ), 151–171 (VVVL…QGLA), 205–225 (AFWS…NGFI), 236–256 (WGLG…IWTL), 303–323 (LIGL…LNLA), 336–356 (IAML…EALL), 409–429 (TIFI…GGLI), 438–458 (TLMV…LDGN), 468–488 (LAVS…ARVG), 500–520 (VVIS…STIA), and 578–598 (GIIL…SCLM).

The protein belongs to the major facilitator superfamily.

It is found in the cell membrane. Functionally, siderophore transporter; part of the gene cluster 14 that mediates the biosynthesis of a ferrichrome A-like siderophors which may contribute to organismal virulence. The protein is Siderophore transporter MYCGRDRAFT_70577 of Zymoseptoria tritici (strain CBS 115943 / IPO323) (Speckled leaf blotch fungus).